The sequence spans 290 residues: Arylamine N-acetyltransferase 1 (290 aa).

Met-1 carries the post-translational modification N-acetylmethionine. Residue Cys-68 is the Acyl-thioester intermediate of the active site. 2 residues coordinate CoA: Thr-103 and Gly-104. Substrate is bound at residue 106 to 107 (IH). Residues His-107 and Asp-122 contribute to the active site. Residues Tyr-208 and Ser-214 each contribute to the CoA site.

The protein belongs to the arylamine N-acetyltransferase family.

It is found in the cytoplasm. It carries out the reaction an arylamine + acetyl-CoA = an N-acetylarylamine + CoA. The sequence is that of Arylamine N-acetyltransferase 1 (NAT1) from Oryctolagus cuniculus (Rabbit).